The sequence spans 1489 residues: MKLAFNKLLVASVVFTVLSFGLLLASLFTTTATTPSEWTILLPEFRFPVNKKQTTEQFLVEKIVHEHEEGEDVRSALYLTHHGYFMNAIANMKVTYRQKSYTVNDVCFKPHSAIFENVPAPENIDKLPAYFQRLLLEMQRLSPCLIVTPLNCFYDSYHIHSEISNWNASTDYLNRRLRNSYLEAIEEKDSRPYVKSTYGPELIKEWARHMFAIPSKPLSNFSKSDLYSRVKTWLSSIAARKKICADPMRSCDETLDAENYFNVCTVMQQINDYDERRKQRLKFQLEYGDEEFTTRLDCVEDREKFIEWMQERNLRDMLKLFASSVEIPDHKEIPNQVCDGIYHDLDTSSGLELFRGARSFSNNTSAYDTINVELGFMTPENLLTTMRHSDFVNGFESIWTIERARELLNEFRLALKVEVTKFSESRSSRRVKVTTRIVNQIEEEGSDEEMEYHMIYFILGACALMVALFAAFAFSEAFLTSLSMFLLRGFITGLLFIFLCKSGGLILIDSNFLCYITMHLAFNLVMTARVTFICYRIGGCVQSEKDFVKSNFSSLGSVPVDSLKEDSCKRHVQYVLAKYTKFQVAQDAYSEEPFEKLPKYWFLIAIVLVPVIGVYWFFIDSDVQKICIVLLPAFLIAAFEEMRVKNQLLRERRIKKAIQRLQKEENTRIMSRGEIDNLLSGNAELSGEKSHYESKQGVLHHGSAGGLFELSRSTYDVSLIMAYPNQMIRNLRLCALGAYFRLFKMKYCAVVVSSVAALLILLSIGLLFIPVQRSSVPKELQQDELSIDFAIPNVSSSSWESINEYLEEFNSEIDSITNLQTITNGRRVLINSTSKINNFLKWVDDEPISWYLTAPLTRPYRKTHLPNPFRFQFRYGFDSIQKSTIIDVVERIDTLLTKYTETLSFPKAIGFLYEHYHQKAVVWNSFAYHEIFAAAVLAGFFSIIVVFFSIGPVVLPTLAFAFFVVGNRLEIAAIVSLFSLEYHQCYTNVAVFVGFLAAWTPFCDLARFRGRLLYKDQTRRTPELATQRRIRVPHVAAVDTVQIFAIFLTATILLIVITAIIPQFRAFFIPTVILLITLLLAVFNSLAVSLAAYQMFEHEVRHCYHDQLQSLTTTGKVCDMTRKKLLPREEDLSIPMEEFSIRPTENTKHYAPRPIDNSDPPEQAADEEVVNQDPSMEAARRQYVEFTHRTTGMPIELINQFVDNFPVFNVPANFLPNYFALGGAPLDANNGVLLRQPGIAPPPRPNREEDEEERFGLGGGEDDDSYPSSGDDIGDPAKEQQEVTDDVATRYKEEEVRKKVQPAVPNYDDPNVPGPSNPVPRQVEQVSREAPEDSPNREPRILVYQRPPRLHEIPQISHGRNPLHDPPSMEEYVQKYDDPNQPPSRRADQYPPSFTPAMVGYCEDVYWKYNERNLPDNVPMPPRPRDWDQRRLVELPPPEDFDEVPPPGRSAIPIPPGAIRLRERRREQHLREQEARRNRPESPDDTPGL.

Residues 1-33 (MKLAFNKLLVASVVFTVLSFGLLLASLFTTTAT) form the signal peptide. The next 11 membrane-spanning stretches (helical) occupy residues 454–474 (MIYFILGACALMVALFAAFAF), 489–509 (GFITGLLFIFLCKSGGLILID), 513–533 (LCYITMHLAFNLVMTARVTFI), 600–620 (YWFLIAIVLVPVIGVYWFFID), 622–642 (DVQKICIVLLPAFLIAAFEEM), 749–769 (AVVVSSVAALLILLSIGLLFI), 931–951 (IFAAAVLAGFFSIIVVFFSIG), 958–978 (LAFAFFVVGNRLEIAAIVSLF), 986–1006 (YTNVAVFVGFLAAWTPFCDLA), 1041–1061 (VQIFAIFLTATILLIVITAII), and 1066–1086 (AFFIPTVILLITLLLAVFNSL). The interaction with fem-3 stretch occupies residues 1138–1288 (EFSIRPTENT…EQQEVTDDVA (151 aa)). Disordered stretches follow at residues 1143–1176 (PTENTKHYAPRPIDNSDPPEQAADEEVVNQDPSM), 1233–1393 (LLRQ…YPPS), and 1412–1489 (RNLP…TPGL). 3 stretches are compositionally biased toward basic and acidic residues: residues 1275–1298 (DPAKEQQEVTDDVATRYKEEEVRK), 1326–1340 (VSREAPEDSPNREPR), and 1423–1433 (RPRDWDQRRLV). An MX regulatory domain; required for tra-1 binding region spans residues 1402–1423 (CEDVYWKYNERNLPDNVPMPPR). Pro residues predominate over residues 1444 to 1456 (VPPPGRSAIPIPP). The segment covering 1460 to 1482 (RLRERRREQHLREQEARRNRPES) has biased composition (basic and acidic residues).

Interacts with tra-1 and fem-3.

The protein localises to the membrane. In terms of biological role, plays a major role in controlling sexual cell fates. Promotes female development in XX animals where it sequesters one or more of the FEM proteins to the membrane thereby freeing the tra-1 protein (a putative transcription factor) to enter the nucleus and promote female development. In XO animals it acts as a receptor for her-1 which prevents it from binding to FEM proteins thereby repressing the activity of tra-1. Negatively regulates male development when bound to fem-3 and is required together with tra-1 for promoting spermatogenesis. Also required for feminizing tra-3 activity. The polypeptide is Sex-determining transformer protein 2 (Caenorhabditis briggsae).